The following is a 537-amino-acid chain: Putative cysteine ligase BshC (537 aa).

Positions I422 to I450 form a coiled coil.

Belongs to the BshC family.

Functionally, involved in bacillithiol (BSH) biosynthesis. May catalyze the last step of the pathway, the addition of cysteine to glucosamine malate (GlcN-Mal) to generate BSH. In Staphylococcus aureus (strain bovine RF122 / ET3-1), this protein is Putative cysteine ligase BshC.